Consider the following 282-residue polypeptide: MRVVLIVDIVRQEEKLIAKALEENKVQYDIINVAQEPLPFNKALGRYDVAIIRPVSMYRALYSSAVLEAAGVHTINSSDVINVCGDKILTYSKLYREGIPIPDSIIALSAEAALKAYEQRGFPLIDKPPIGSWGRLVSLIRDVFEGKTIIEHRELMGNSALKAHIVQEYIQYKGRDIRCIAIGEELLGCYARNIPPNEWRANVALGGTPSNIEVDEKLKETVVKAVSIVHGEFVSIDILEHPNKGYVVNELNDVPEFKGFMVATNINVAQKLVEYIKENYSK.

ATP-binding positions include Lys87, Lys127, 131-137 (GSWGRLV), and 167-178 (QEYIQYKGRDIR). In terms of domain architecture, ATP-grasp spans 91-277 (YSKLYREGIP…VAQKLVEYIK (187 aa)). Arg192 is a binding site for substrate. Asn202 provides a ligand contact to ATP. Position 203 to 204 (203 to 204 (VA)) interacts with substrate. Residues Asp237, Glu250, and Asn252 each contribute to the Mg(2+) site. 256-260 (EFKGF) contributes to the substrate binding site. The GF motif that is essential for ArgX substrate specificity signature appears at 259 to 260 (GF).

The protein belongs to the RimK family. LysX subfamily. As to quaternary structure, homotetramer. Interacts with LysW. It depends on Mg(2+) as a cofactor.

It catalyses the reaction [amino-group carrier protein]-C-terminal-L-glutamate + L-glutamate + ATP = [amino-group carrier protein]-C-terminal-gamma-(L-glutamyl)-L-glutamate + ADP + phosphate + H(+). It participates in amino-acid biosynthesis; L-arginine biosynthesis. Catalyzes the ATP-dependent formation of a covalent bond between the amino group of glutamate and the gamma-carboxyl group of the C-terminal glutamate residue in LysW. The polypeptide is Glutamate--LysW ligase ArgX (Sulfurisphaera tokodaii (strain DSM 16993 / JCM 10545 / NBRC 100140 / 7) (Sulfolobus tokodaii)).